The chain runs to 461 residues: CBL-interacting protein kinase 5 (461 aa).

The Protein kinase domain maps to 12 to 266 (YELGRMLGQG…VEKLVEHPWF (255 aa)). Residues 18–26 (LGQGTFAKV) and lysine 41 each bind ATP. Residue aspartate 134 is the Proton acceptor of the active site. The segment at 152–181 (DFGLSAFKECQKQDGLLHTTCGTPAYVAPE) is activation loop. One can recognise an NAF domain in the interval 300–334 (EGKAKEPASSLKPVSLNAFDIISLSKGFDLSGLFE). The interval 340-369 (KADSRFMTQKPASAIVSKLEQIAETESFKV) is PPI. The interval 440–461 (HPSLAQSSTLTQSSKSISRHAI) is disordered. The segment covering 442–455 (SLAQSSTLTQSSKS) has biased composition (low complexity).

It belongs to the protein kinase superfamily. CAMK Ser/Thr protein kinase family. SNF1 subfamily. Mn(2+) serves as cofactor.

The enzyme catalyses L-seryl-[protein] + ATP = O-phospho-L-seryl-[protein] + ADP + H(+). It carries out the reaction L-threonyl-[protein] + ATP = O-phospho-L-threonyl-[protein] + ADP + H(+). Functionally, CIPK serine-threonine protein kinases interact with CBL proteins. Binding of a CBL protein to the regulatory NAF domain of CIPK protein lead to the activation of the kinase in a calcium-dependent manner. The polypeptide is CBL-interacting protein kinase 5 (CIPK5) (Oryza sativa subsp. japonica (Rice)).